Reading from the N-terminus, the 309-residue chain is DNA replication terminus site-binding protein (309 aa).

Belongs to the Tus family.

The protein resides in the cytoplasm. Functionally, trans-acting protein required for termination of DNA replication. Binds to DNA replication terminator sequences (terA to terF) to prevent the passage of replication forks. The termination efficiency will be affected by the affinity of this protein for the terminator sequence. This Yersinia enterocolitica serotype O:8 / biotype 1B (strain NCTC 13174 / 8081) protein is DNA replication terminus site-binding protein.